The following is a 669-amino-acid chain: Acetolactate synthase, mitochondrial (669 aa).

Residues 1–140 constitute a mitochondrion transit peptide; the sequence is MTVLAPLRRL…PRHEQAAGHA (140 aa). Glu-134 contacts thiamine diphosphate. FAD-binding positions include Arg-236, 351–372, and 403–422; these read HGSGYANMAMQEADLILALGVR and DISPKNIGKVVQPTEAIEGD. The thiamine pyrophosphate binding stretch occupies residues 497–577; that stretch reads AHQMWAATFY…VKILILNNEE (81 aa). Residues Asp-548 and Asn-575 each contribute to the Mg(2+) site.

The protein belongs to the TPP enzyme family. Mg(2+) serves as cofactor. It depends on thiamine diphosphate as a cofactor.

The protein localises to the mitochondrion. The catalysed reaction is 2 pyruvate + H(+) = (2S)-2-acetolactate + CO2. The protein operates within amino-acid biosynthesis; L-isoleucine biosynthesis; L-isoleucine from 2-oxobutanoate: step 1/4. It functions in the pathway amino-acid biosynthesis; L-valine biosynthesis; L-valine from pyruvate: step 1/4. The protein is Acetolactate synthase, mitochondrial (ilv1) of Schizosaccharomyces pombe (strain 972 / ATCC 24843) (Fission yeast).